Here is a 62-residue protein sequence, read N- to C-terminus: Large ribosomal subunit protein bL28 (62 aa).

A disordered region spans residues 1-22 (MGKQCFVTGRKASTGNRRSHAL).

It belongs to the bacterial ribosomal protein bL28 family.

In Staphylococcus aureus (strain N315), this protein is Large ribosomal subunit protein bL28.